The sequence spans 635 residues: Threonine--tRNA ligase (635 aa).

A TGS domain is found at 1-61 (MIKITLKDGK…HKDSSLEILT (61 aa)). A catalytic region spans residues 242 to 532 (DHRKLGKELD…LIEQYAGAFP (291 aa)). Zn(2+) contacts are provided by Cys333, His384, and His509.

It belongs to the class-II aminoacyl-tRNA synthetase family. In terms of assembly, homodimer. Zn(2+) serves as cofactor.

Its subcellular location is the cytoplasm. The enzyme catalyses tRNA(Thr) + L-threonine + ATP = L-threonyl-tRNA(Thr) + AMP + diphosphate + H(+). Its function is as follows. Catalyzes the attachment of threonine to tRNA(Thr) in a two-step reaction: L-threonine is first activated by ATP to form Thr-AMP and then transferred to the acceptor end of tRNA(Thr). Also edits incorrectly charged L-seryl-tRNA(Thr). The protein is Threonine--tRNA ligase of Clostridium botulinum (strain Langeland / NCTC 10281 / Type F).